Consider the following 251-residue polypeptide: Ubiquinone/menaquinone biosynthesis C-methyltransferase UbiE (251 aa).

S-adenosyl-L-methionine-binding positions include Thr74, Asp95, and 123 to 124; that span reads NA.

The protein belongs to the class I-like SAM-binding methyltransferase superfamily. MenG/UbiE family.

It catalyses the reaction a 2-demethylmenaquinol + S-adenosyl-L-methionine = a menaquinol + S-adenosyl-L-homocysteine + H(+). The enzyme catalyses a 2-methoxy-6-(all-trans-polyprenyl)benzene-1,4-diol + S-adenosyl-L-methionine = a 5-methoxy-2-methyl-3-(all-trans-polyprenyl)benzene-1,4-diol + S-adenosyl-L-homocysteine + H(+). It participates in quinol/quinone metabolism; menaquinone biosynthesis; menaquinol from 1,4-dihydroxy-2-naphthoate: step 2/2. The protein operates within cofactor biosynthesis; ubiquinone biosynthesis. Functionally, methyltransferase required for the conversion of demethylmenaquinol (DMKH2) to menaquinol (MKH2) and the conversion of 2-polyprenyl-6-methoxy-1,4-benzoquinol (DDMQH2) to 2-polyprenyl-3-methyl-6-methoxy-1,4-benzoquinol (DMQH2). The chain is Ubiquinone/menaquinone biosynthesis C-methyltransferase UbiE from Shewanella woodyi (strain ATCC 51908 / MS32).